The chain runs to 268 residues: TodF product hydratase (268 aa).

The protein belongs to the hydratase/decarboxylase family.

It functions in the pathway xenobiotic degradation; toluene degradation. Its function is as follows. Converts the product of 2-hydroxy-6-oxo-2,4-heptadienoate hydrolase. The polypeptide is TodF product hydratase (todJ) (Pseudomonas putida (strain ATCC 700007 / DSM 6899 / JCM 31910 / BCRC 17059 / LMG 24140 / F1)).